We begin with the raw amino-acid sequence, 467 residues long: MNTNQDNGNQLQRTMKSRHLFMISLGGVIGTGFFLGTGFTINQAGPLGAVLSYLVGGFIMFLTMLCLGELAVAFPVSGSFQTYATKFISPAFGFAFGWLYWLGWAVTCAIEFLSAGQLMQRWFPHIDVWIWCLVFAALMFILNAITTKAFAESEFWFSGIKILIILLFIILGGAAMFGLIDLKGGEQAPFLTHFYEDGLFPNGIKAMLITMITVNFAFQGTELIGVAAGESEDPEKTIPRSIKQTVWRTLVFFVLSIIVIAGMIPWKQAGVVESPFVAVFEQIGIPYAADIMNFVILIALLSVANSGLYASTRILYAMANEGQAFKALGKTNQRGVPMYSLIVTMAVACLSLLTKFAQAETVYMVLLSLAGMSAQVGWITISLSQIMFRRKYIREGGKIEDLKFKTPLYPVLPLIGLTLNTVVLISLAFDPEQRIALYCGVPFMIICYIIYHVVIKKRQQANRQLEL.

The next 12 membrane-spanning stretches (helical) occupy residues 21–41 (FMISLGGVIGTGFFLGTGFTI), 47–67 (LGAVLSYLVGGFIMFLTMLCL), 87–107 (FISPAFGFAFGWLYWLGWAVT), 122–142 (WFPHIDVWIWCLVFAALMFIL), 162–182 (ILIILLFIILGGAAMFGLIDL), 207–227 (MLITMITVNFAFQGTELIGVA), 246–266 (VWRTLVFFVLSIIVIAGMIPW), 283–303 (IGIPYAADIMNFVILIALLSV), 336–356 (VPMYSLIVTMAVACLSLLTKF), 361–381 (TVYMVLLSLAGMSAQVGWITI), 409–429 (YPVLPLIGLTLNTVVLISLAF), and 435–455 (IALYCGVPFMIICYIIYHVVI).

This sequence belongs to the amino acid-polyamine-organocation (APC) superfamily. Amino acid transporter (AAT) (TC 2.A.3.1) family.

It is found in the cell membrane. Its function is as follows. Putative transport protein involved in arginine degradative pathway. Probably transports arginine or ornithine. The polypeptide is Amino-acid permease RocE (Bacillus subtilis (strain 168)).